We begin with the raw amino-acid sequence, 313 residues long: Hydroxyphenylpyruvate reductase (313 aa).

Residues 152–155 (LGRI), 174–176 (SRS), and isoleucine 230 each bind NADP(+). The active site involves arginine 232. NADP(+) is bound at residue aspartate 256. Glutamate 261 is a catalytic residue. The active-site Proton donor is the histidine 279.

This sequence belongs to the D-isomer specific 2-hydroxyacid dehydrogenase family.

The catalysed reaction is (2R)-2-hydroxy-3-(4-hydroxyphenyl)propanoate + NAD(+) = 3-(4-hydroxyphenyl)pyruvate + NADH + H(+). It carries out the reaction (2R)-2-hydroxy-3-(4-hydroxyphenyl)propanoate + NADP(+) = 3-(4-hydroxyphenyl)pyruvate + NADPH + H(+). It catalyses the reaction (2R)-3-(3,4-dihydroxyphenyl)lactate + NADP(+) = 3-(3,4-dihydroxyphenyl)pyruvate + NADPH + H(+). The enzyme catalyses (2R)-3-(3,4-dihydroxyphenyl)lactate + NAD(+) = 3-(3,4-dihydroxyphenyl)pyruvate + NADH + H(+). Its function is as follows. Catalyzes the NAD(P)H-dependent reduction of 4-hydroxyphenylpyruvate to 4-hydroxyphenyllactate and 3,4-dihydroxyphenylpyruvate to 3,4-dihydroxyphenyllactate in the biosynthesis of rosmarinic acid. Rosmarinic acid is an ester of caffeic acid and 3,4-dihydroxyphenyllactic acid. NADP is the preferred substrate. This Plectranthus scutellarioides (Coleus) protein is Hydroxyphenylpyruvate reductase (HPPR).